A 144-amino-acid polypeptide reads, in one-letter code: Endoribonuclease YbeY (144 aa).

Residues His108, His112, and His118 each coordinate Zn(2+).

It belongs to the endoribonuclease YbeY family. It depends on Zn(2+) as a cofactor.

It is found in the cytoplasm. Single strand-specific metallo-endoribonuclease involved in late-stage 70S ribosome quality control and in maturation of the 3' terminus of the 16S rRNA. In Phytoplasma australiense, this protein is Endoribonuclease YbeY.